We begin with the raw amino-acid sequence, 255 residues long: Zinc import ATP-binding protein ZnuC (255 aa).

In terms of domain architecture, ABC transporter spans 5 to 220 (VALEHIAVAF…PDFIAMFGYR (216 aa)).

The protein belongs to the ABC transporter superfamily. Zinc importer (TC 3.A.1.15.5) family. In terms of assembly, the complex is composed of two ATP-binding proteins (ZnuC), two transmembrane proteins (ZnuB) and a solute-binding protein (ZnuA).

It is found in the cell inner membrane. The catalysed reaction is Zn(2+)(out) + ATP(in) + H2O(in) = Zn(2+)(in) + ADP(in) + phosphate(in) + H(+)(in). In terms of biological role, part of the ABC transporter complex ZnuABC involved in zinc import. Responsible for energy coupling to the transport system. The sequence is that of Zinc import ATP-binding protein ZnuC from Sodalis glossinidius (strain morsitans).